We begin with the raw amino-acid sequence, 1274 residues long: Enamelin (1274 aa).

The signal sequence occupies residues 1-38 (MLLLQCRNPTSPPKPCGLVPNVKMSLLVFLGLLGVSAA). Positions 103 to 115 (PVPNGWQQPPMPN) are enriched in pro residues. 5 disordered regions span residues 103-413 (PVPN…VGAN), 476-610 (IGAN…NNPN), 668-700 (PFQS…KHFP), 712-734 (LPPL…YGSR), and 753-814 (YIKS…EEMN). The segment covering 117-127 (PSKTDQTQETA) has biased composition (polar residues). The span at 128-142 (KPNQTNPQEPQPQKQ) shows a compositional bias: low complexity. Asn-130 carries N-linked (GlcNAc...) asparagine glycosylation. Residues 143 to 158 (PLKEPPNEAARAKDDA) are compositionally biased toward basic and acidic residues. Residues 174–185 (YPQPPWPIPQRG) show a composition bias toward pro residues. Phosphoserine is present on residues Ser-196 and Ser-219. Residues 225-239 (DYEKPKEKDPPKPED) show a composition bias toward basic and acidic residues. Positions 249-272 (ASTNSTVPDANATQSIPEGGNDTS) are enriched in polar residues. Residues Asn-252, Asn-259, and Asn-269 are each glycosylated (N-linked (GlcNAc...) asparagine). Positions 273–287 (PIGNTGPGPNAGNNP) are enriched in low complexity. Asn-300 is a glycosylation site (N-linked (GlcNAc...) asparagine). Over residues 318–330 (PNIYENYPYPNYP) the composition is skewed to low complexity. Composition is skewed to polar residues over residues 331 to 344 (SERQ…QGPR), 486 to 503 (SIGT…TNPA), 522 to 549 (TNPS…QASN), and 565 to 574 (VTVSHNMKTQ). Residues 575–587 (NPKEKSLGQKERT) show a composition bias toward basic and acidic residues. The segment covering 588-598 (VTPTKDASNPW) has biased composition (polar residues). Positions 715-727 (LKEDYGRQDENLR) are enriched in basic and acidic residues. A compositionally biased stretch (polar residues) spans 753-766 (YIKSNPWDKSSPST). Over residues 787 to 801 (QYNEEDPIDPNEDES) the composition is skewed to acidic residues. Residue Asn-1066 is glycosylated (N-linked (GlcNAc...) asparagine). Disordered stretches follow at residues 1071 to 1097 (KLTA…PYSG) and 1109 to 1128 (SEAS…DLGG).

Phosphorylated by FAM20C in vitro. As to expression, expressed in developing teeth.

Its subcellular location is the secreted. It is found in the extracellular space. It localises to the extracellular matrix. Involved in the mineralization and structural organization of enamel. Involved in the extension of enamel during the secretory stage of dental enamel formation. This Mus musculus (Mouse) protein is Enamelin (Enam).